A 1701-amino-acid polypeptide reads, in one-letter code: Coiled-coil domain-containing protein 180 (1701 aa).

A disordered region spans residues Met-1–Pro-35. A coiled-coil region spans residues Gln-171–Glu-198. Disordered regions lie at residues Glu-657–Glu-808, His-1272–Arg-1291, and Gly-1319–Lys-1354. Residues Gln-661–Gln-671 show a composition bias toward basic residues. Residues Gly-672–Glu-682 show a composition bias toward basic and acidic residues. Over residues Ser-683–Arg-692 the composition is skewed to polar residues. Positions Glu-696–Met-705 are enriched in acidic residues. The segment covering Glu-755–Glu-766 has biased composition (basic and acidic residues). Positions Val-757–Glu-804 form a coiled coil. Positions Ser-767–Glu-808 are enriched in acidic residues.

This chain is Coiled-coil domain-containing protein 180 (CCDC180), found in Homo sapiens (Human).